A 139-amino-acid polypeptide reads, in one-letter code: Nucleoside diphosphate kinase (139 aa).

ATP is bound by residues Lys11, Phe59, Arg87, Thr93, Arg104, and Asn114. Residue His117 is the Pros-phosphohistidine intermediate of the active site.

This sequence belongs to the NDK family. As to quaternary structure, homotetramer. Mg(2+) serves as cofactor.

It localises to the cytoplasm. The enzyme catalyses a 2'-deoxyribonucleoside 5'-diphosphate + ATP = a 2'-deoxyribonucleoside 5'-triphosphate + ADP. It carries out the reaction a ribonucleoside 5'-diphosphate + ATP = a ribonucleoside 5'-triphosphate + ADP. Major role in the synthesis of nucleoside triphosphates other than ATP. The ATP gamma phosphate is transferred to the NDP beta phosphate via a ping-pong mechanism, using a phosphorylated active-site intermediate. The chain is Nucleoside diphosphate kinase from Pasteurella multocida (strain Pm70).